A 361-amino-acid chain; its full sequence is MTQPTLFIDRDGTLIDEPKTDFQIDSLEKLKLERNVIPALLKLKDHYRFVMVSNQDGLGTDSFPQENFDKPHNAMLEIFRSQGIEFDAILICPHKPEDNCDCRKPKIKLLKKYIDKKLFDPAHSFVIGDRATDVQLAENLGIQALQYHPEKLDWDLIVEKLLPKTTACKRPPRYAEVVRTTKETDIKVQVWLDETGVNQISTGVGFFDHMLDQIATHGGFRMNVQCKGDLWIDEHHTVEDTALALGTALKQALGDKRGIQRFGFVLPMDECKAECTMDLSGRPYFKFKAKFKREKVGDFSTEMTEHFFQSIAYTLMATLHLKTQGDNDHHKIESLFKVFGRTLRQCIKVEGNELPSSKGVL.

The interval 1–172 is histidinol-phosphatase; sequence MTQPTLFIDR…PKTTACKRPP (172 aa). The Nucleophile role is filled by D9. D9 and D11 together coordinate Mg(2+). Residue D11 is the Proton donor of the active site. Residues C92, H94, C100, and C102 each coordinate Zn(2+). D129 is a binding site for Mg(2+). An imidazoleglycerol-phosphate dehydratase region spans residues 173 to 361; the sequence is RYAEVVRTTK…NELPSSKGVL (189 aa).

It in the N-terminal section; belongs to the histidinol-phosphatase family. In the C-terminal section; belongs to the imidazoleglycerol-phosphate dehydratase family. The cofactor is Mg(2+). Zn(2+) serves as cofactor.

It localises to the cytoplasm. The catalysed reaction is D-erythro-1-(imidazol-4-yl)glycerol 3-phosphate = 3-(imidazol-4-yl)-2-oxopropyl phosphate + H2O. The enzyme catalyses L-histidinol phosphate + H2O = L-histidinol + phosphate. It functions in the pathway amino-acid biosynthesis; L-histidine biosynthesis; L-histidine from 5-phospho-alpha-D-ribose 1-diphosphate: step 6/9. The protein operates within amino-acid biosynthesis; L-histidine biosynthesis; L-histidine from 5-phospho-alpha-D-ribose 1-diphosphate: step 8/9. This is Histidine biosynthesis bifunctional protein HisB from Actinobacillus pleuropneumoniae serotype 3 (strain JL03).